We begin with the raw amino-acid sequence, 108 residues long: uncharacterized protein (108 aa).

Positions 56–108 (ELPSRGCLPAPRPESGQGRLSTGISQNGGRSSAQPCPRCIAGESGHFSHTKNH) are disordered. Residues 73–89 (GRLSTGISQNGGRSSAQ) show a composition bias toward polar residues.

This is an uncharacterized protein from Homo sapiens (Human).